We begin with the raw amino-acid sequence, 594 residues long: Transcription factor TFIIIB component B'' (594 aa).

The disordered stretch occupies residues 1–169 (MSSIVNKSGT…ARRLSTISNK (169 aa)). Ser49 is modified (phosphoserine). Polar residues predominate over residues 150–168 (LDSSSNSNGTARRLSTISN). Ser178 bears the Phosphoserine mark. Disordered stretches follow at residues 217–245 (SPPTAMTDSLDRNEFSSETSTSREADENE) and 317–343 (ARQEFKPLHSLTKEEQEEEEEKRKEER). Composition is skewed to basic and acidic residues over residues 225–241 (SLDRNEFSSETSTSREA) and 317–330 (ARQEFKPLHSLTKE). Residues 415–466 (SYTDPWTVEEMIKFYKALSMWGTDFNLISQLYPYRSRKQVKAKFVNEEKKRP) enclose the SANT domain. The span at 520-529 (KNTAKEEDQT) shows a compositional bias: basic and acidic residues. Disordered stretches follow at residues 520–547 (KNTAKEEDQTAQRLNDANLNKKGSGGIM) and 567–594 (LKRKKLKERNNDDNEDNEGSEEEPEIDQ). The segment covering 579–594 (DNEDNEGSEEEPEIDQ) has biased composition (acidic residues).

Belongs to the TFC5 family. In terms of assembly, TFIIIB comprises the TATA-binding protein (TBP), the B-related factor (BRF) and the B'' component (BDP1). Interacts with TFC4.

It localises to the nucleus. Functionally, general activator of RNA polymerase III transcription. This Saccharomyces cerevisiae (strain ATCC 204508 / S288c) (Baker's yeast) protein is Transcription factor TFIIIB component B'' (BDP1).